Reading from the N-terminus, the 120-residue chain is Large ribosomal subunit protein bL12 (120 aa).

This sequence belongs to the bacterial ribosomal protein bL12 family. As to quaternary structure, homodimer. Part of the ribosomal stalk of the 50S ribosomal subunit. Forms a multimeric L10(L12)X complex, where L10 forms an elongated spine to which 2 to 4 L12 dimers bind in a sequential fashion. Binds GTP-bound translation factors.

In terms of biological role, forms part of the ribosomal stalk which helps the ribosome interact with GTP-bound translation factors. Is thus essential for accurate translation. The polypeptide is Large ribosomal subunit protein bL12 (Lachnoclostridium phytofermentans (strain ATCC 700394 / DSM 18823 / ISDg) (Clostridium phytofermentans)).